Here is a 129-residue protein sequence, read N- to C-terminus: Small ribosomal subunit protein uS11 (129 aa).

This sequence belongs to the universal ribosomal protein uS11 family. In terms of assembly, part of the 30S ribosomal subunit. Interacts with proteins S7 and S18. Binds to IF-3.

Located on the platform of the 30S subunit, it bridges several disparate RNA helices of the 16S rRNA. Forms part of the Shine-Dalgarno cleft in the 70S ribosome. This Bartonella bacilliformis (strain ATCC 35685 / KC583 / Herrer 020/F12,63) protein is Small ribosomal subunit protein uS11.